Reading from the N-terminus, the 174-residue chain is ATP-dependent protease subunit HslV (174 aa).

Residue threonine 2 is part of the active site. Glycine 157, cysteine 160, and threonine 163 together coordinate Na(+).

The protein belongs to the peptidase T1B family. HslV subfamily. In terms of assembly, a double ring-shaped homohexamer of HslV is capped on each side by a ring-shaped HslU homohexamer. The assembly of the HslU/HslV complex is dependent on binding of ATP.

The protein resides in the cytoplasm. The catalysed reaction is ATP-dependent cleavage of peptide bonds with broad specificity.. Allosterically activated by HslU binding. Its function is as follows. Protease subunit of a proteasome-like degradation complex believed to be a general protein degrading machinery. This chain is ATP-dependent protease subunit HslV, found in Cellvibrio japonicus (strain Ueda107) (Pseudomonas fluorescens subsp. cellulosa).